A 244-amino-acid chain; its full sequence is 7-cyano-7-deazaguanine synthase (244 aa).

Residue 14 to 24 coordinates ATP; the sequence is FSGGQDSATCV. Zn(2+)-binding residues include Cys202, Cys217, Cys220, and Cys223.

The protein belongs to the QueC family. Zn(2+) is required as a cofactor.

It catalyses the reaction 7-carboxy-7-deazaguanine + NH4(+) + ATP = 7-cyano-7-deazaguanine + ADP + phosphate + H2O + H(+). The protein operates within purine metabolism; 7-cyano-7-deazaguanine biosynthesis. Its function is as follows. Catalyzes the ATP-dependent conversion of 7-carboxy-7-deazaguanine (CDG) to 7-cyano-7-deazaguanine (preQ(0)). The sequence is that of 7-cyano-7-deazaguanine synthase from Burkholderia cenocepacia (strain HI2424).